The primary structure comprises 123 residues: Protein Wnt-7 (123 aa).

Ser-1 is lipidated: O-palmitoleoyl serine; by PORCN. Residues Cys-89 and Cys-104 are joined by a disulfide bond. Asn-90 carries N-linked (GlcNAc...) asparagine glycosylation.

Belongs to the Wnt family. In terms of processing, palmitoleoylation is required for efficient binding to frizzled receptors. Depalmitoleoylation leads to Wnt signaling pathway inhibition.

The protein resides in the secreted. It localises to the extracellular space. Its subcellular location is the extracellular matrix. Ligand for members of the frizzled family of seven transmembrane receptors. Probable developmental protein. May be a signaling molecule which affects the development of discrete regions of tissues. Is likely to signal over only few cell diameters. The sequence is that of Protein Wnt-7 (WNT-7) from Evasterias troschelii (Mottled sea star).